The primary structure comprises 245 residues: tRNA (guanine-N(1)-)-methyltransferase (245 aa).

S-adenosyl-L-methionine is bound by residues G111 and 131–136 (IGDYVL).

It belongs to the RNA methyltransferase TrmD family. In terms of assembly, homodimer.

The protein localises to the cytoplasm. The catalysed reaction is guanosine(37) in tRNA + S-adenosyl-L-methionine = N(1)-methylguanosine(37) in tRNA + S-adenosyl-L-homocysteine + H(+). Functionally, specifically methylates guanosine-37 in various tRNAs. The sequence is that of tRNA (guanine-N(1)-)-methyltransferase from Caldicellulosiruptor saccharolyticus (strain ATCC 43494 / DSM 8903 / Tp8T 6331).